Reading from the N-terminus, the 277-residue chain is 4-hydroxybenzoate octaprenyltransferase (277 aa).

8 helical membrane passes run Phe-24 to Ile-44, Val-81 to Leu-101, Asn-102 to Met-122, Pro-129 to Ile-149, Leu-152 to Thr-172, Ile-201 to Glu-221, Ile-224 to Thr-244, and Ala-255 to Tyr-275.

This sequence belongs to the UbiA prenyltransferase family. Mg(2+) serves as cofactor.

It is found in the cell inner membrane. It carries out the reaction all-trans-octaprenyl diphosphate + 4-hydroxybenzoate = 4-hydroxy-3-(all-trans-octaprenyl)benzoate + diphosphate. Its pathway is cofactor biosynthesis; ubiquinone biosynthesis. Catalyzes the prenylation of para-hydroxybenzoate (PHB) with an all-trans polyprenyl group. Mediates the second step in the final reaction sequence of ubiquinone-8 (UQ-8) biosynthesis, which is the condensation of the polyisoprenoid side chain with PHB, generating the first membrane-bound Q intermediate 3-octaprenyl-4-hydroxybenzoate. The polypeptide is 4-hydroxybenzoate octaprenyltransferase (Haemophilus ducreyi (strain 35000HP / ATCC 700724)).